Consider the following 131-residue polypeptide: MRHYEIVFMVHPDQSEQVPGMIERYSAAITGAEGKIHRLEDWGRRQLAYPINKLHKAHYVLMNVEAPQEVIDELETTFRFNDAVIRSMVMRTKHAVTEASPMVKAKDERRERRDDFANETADDAEAGDSEE.

A disordered region spans residues 98–131 (EASPMVKAKDERRERRDDFANETADDAEAGDSEE). Residues 104–116 (KAKDERRERRDDF) are compositionally biased toward basic and acidic residues. The segment covering 120–131 (TADDAEAGDSEE) has biased composition (acidic residues).

This sequence belongs to the bacterial ribosomal protein bS6 family.

Its function is as follows. Binds together with bS18 to 16S ribosomal RNA. The polypeptide is Small ribosomal subunit protein bS6 (Cronobacter sakazakii (strain ATCC BAA-894) (Enterobacter sakazakii)).